An 800-amino-acid chain; its full sequence is DNA mismatch repair protein MutS (800 aa).

616–623 contributes to the ATP binding site; that stretch reads GPNMGGKS.

It belongs to the DNA mismatch repair MutS family.

Functionally, this protein is involved in the repair of mismatches in DNA. It is possible that it carries out the mismatch recognition step. This protein has a weak ATPase activity. The protein is DNA mismatch repair protein MutS of Buchnera aphidicola subsp. Baizongia pistaciae (strain Bp).